Reading from the N-terminus, the 362-residue chain is E3 ubiquitin-protein ligase TM129 (362 aa).

Residues Met-1 to Val-6 lie on the Lumenal side of the membrane. A helical membrane pass occupies residues Thr-7–Tyr-27. Residues Ser-28–Thr-56 lie on the Cytoplasmic side of the membrane. Residues Ser-57–Ala-77 form a helical membrane-spanning segment. The Lumenal segment spans residues Ala-78–Gln-94. A helical membrane pass occupies residues Leu-95 to Ser-115. Residues Trp-116–Arg-362 are Cytoplasmic-facing. The RING-type; degenerate zinc finger occupies Cys-285 to Arg-350.

Belongs to the TMEM129 family. Integral component of ER-resident dislocation complexes.

The protein resides in the endoplasmic reticulum membrane. It carries out the reaction S-ubiquitinyl-[E2 ubiquitin-conjugating enzyme]-L-cysteine + [acceptor protein]-L-lysine = [E2 ubiquitin-conjugating enzyme]-L-cysteine + N(6)-ubiquitinyl-[acceptor protein]-L-lysine.. It functions in the pathway protein modification; protein ubiquitination. In terms of biological role, E3 ubiquitin-protein ligase involved in ER-associated protein degradation, preferentially associates with the E2 enzyme UBE2J2. Exploited by viral US11 proteins to mediate HLA class I proteins degradation. This chain is E3 ubiquitin-protein ligase TM129 (Tmem129), found in Mus musculus (Mouse).